The primary structure comprises 628 residues: Chaperone protein HtpG (628 aa).

Residues 1 to 339 form an a; substrate-binding region; it reads MSNNQQTLGF…SNDLPLNVSR (339 aa). The tract at residues 340–556 is b; sequence EILQDNKTTA…NDQMTTQMAK (217 aa). Residues 557-628 form a c region; the sequence is LFAMSGQPVP…IKRVNTLLAG (72 aa).

This sequence belongs to the heat shock protein 90 family. In terms of assembly, homodimer.

It is found in the cytoplasm. Molecular chaperone. Has ATPase activity. This chain is Chaperone protein HtpG, found in Actinobacillus succinogenes (strain ATCC 55618 / DSM 22257 / CCUG 43843 / 130Z).